Consider the following 383-residue polypeptide: Non-structural maintenance of chromosomes element 4 homolog B (383 aa).

The segment covering 1-22 (MRNSVKWETELTGDRSRRREAD) has biased composition (basic and acidic residues). 3 disordered regions span residues 1–59 (MRNS…EQGI), 198–231 (MKQRKSRVGNRKRTKPGAGVKPEEVDDTEAEKKS), and 355–383 (QGSVIQEETVVEDSSNMEGDNEDSKNGGL). Over residues 201 to 212 (RKSRVGNRKRTK) the composition is skewed to basic residues. Residues 355–372 (QGSVIQEETVVEDSSNME) show a composition bias toward polar residues.

It belongs to the NSE4 family. In terms of assembly, interacts with SMC5, SMC6A or SMC6B. The SMC5-SMC6 complex is composed of the SMC5 and SMC6 heterodimer attached via their hinge domain and from the non-SMC subunit NSE4A or NSE4B. As to expression, not expressed in seedlings, rosette leaves and floral buds.

The protein localises to the nucleus. Component of the SMC5-SMC6 complex, that promotes sister chromatid alignment after DNA damage and facilitates double-stranded DNA breaks (DSBs) repair via homologous recombination between sister chromatids. The chain is Non-structural maintenance of chromosomes element 4 homolog B (NSE4B) from Arabidopsis thaliana (Mouse-ear cress).